We begin with the raw amino-acid sequence, 61 residues long: Insect toxin BsIT3 (61 aa).

Positions 1 to 61 constitute an LCN-type CS-alpha/beta domain; the sequence is DGYILNSKGC…RWTSSKNKCN (61 aa). Intrachain disulfides connect Cys-10-Cys-60, Cys-14-Cys-35, Cys-21-Cys-42, and Cys-25-Cys-44.

Belongs to the long (4 C-C) scorpion toxin superfamily. Sodium channel inhibitor family. Beta subfamily. In terms of tissue distribution, expressed by the venom gland.

Its subcellular location is the secreted. Functionally, depressant insect beta-toxins cause a transient contraction paralysis followed by a slow flaccid paralysis. They bind voltage-independently at site-4 of sodium channels (Nav) and shift the voltage of activation toward more negative potentials thereby affecting sodium channel activation and promoting spontaneous and repetitive firing. This toxin is active only on insects. The sequence is that of Insect toxin BsIT3 from Hottentotta tamulus sindicus (Scorpion).